We begin with the raw amino-acid sequence, 212 residues long: Phosphoribosyl-dephospho-CoA transferase (212 aa).

Catalysis depends on residues Asp-139 and Asp-141.

Belongs to the MdcG family.

The enzyme catalyses apo-[malonate decarboxylase ACP] + 2'-(5''-triphospho-alpha-D-ribosyl)-3'-dephospho-CoA = holo-[malonate decarboxylase ACP] + diphosphate. Functionally, transfers 2'-(5-triphosphoribosyl)-3'-dephosphocoenzyme-A to the apo-[acyl-carrier-protein] of the malonate decarboxylase to yield holo-[acyl-carrier-protein]. This chain is Phosphoribosyl-dephospho-CoA transferase, found in Azotobacter vinelandii (strain DJ / ATCC BAA-1303).